The sequence spans 465 residues: Ribulose bisphosphate carboxylase large chain (465 aa).

Residue Lys-4 is modified to N6,N6,N6-trimethyllysine. Residues Asn-113 and Thr-163 each coordinate substrate. The active-site Proton acceptor is Lys-165. Lys-167 contacts substrate. Positions 191, 193, and 194 each coordinate Mg(2+). An N6-carboxylysine modification is found at Lys-191. His-284 serves as the catalytic Proton acceptor. Substrate contacts are provided by Arg-285, His-317, and Ser-369.

It belongs to the RuBisCO large chain family. Type I subfamily. As to quaternary structure, heterohexadecamer of 8 large chains and 8 small chains; disulfide-linked. The disulfide link is formed within the large subunit homodimers. Mg(2+) is required as a cofactor. Post-translationally, the disulfide bond which can form in the large chain dimeric partners within the hexadecamer appears to be associated with oxidative stress and protein turnover.

Its subcellular location is the plastid. The protein localises to the chloroplast. It carries out the reaction 2 (2R)-3-phosphoglycerate + 2 H(+) = D-ribulose 1,5-bisphosphate + CO2 + H2O. The enzyme catalyses D-ribulose 1,5-bisphosphate + O2 = 2-phosphoglycolate + (2R)-3-phosphoglycerate + 2 H(+). In terms of biological role, ruBisCO catalyzes two reactions: the carboxylation of D-ribulose 1,5-bisphosphate, the primary event in carbon dioxide fixation, as well as the oxidative fragmentation of the pentose substrate in the photorespiration process. Both reactions occur simultaneously and in competition at the same active site. This chain is Ribulose bisphosphate carboxylase large chain, found in Cyrilla racemiflora (Swamp titi).